Consider the following 492-residue polypeptide: Catalase isozyme 2 (492 aa).

Residues 1-32 (MDPYKFRPSSSNDTPFWTTNAGDPVSNNNSSM) form a disordered region. Over residues 8–32 (PSSSNDTPFWTTNAGDPVSNNNSSM) the composition is skewed to polar residues. Active-site residues include histidine 65 and asparagine 138. A heme-binding site is contributed by tyrosine 348.

It belongs to the catalase family. In terms of assembly, homotetramer. Requires heme as cofactor. Abundant in hypocotyls and roots. Low levels are seen in the endosperms and cotyledons.

The protein localises to the peroxisome. It localises to the glyoxysome. The enzyme catalyses 2 H2O2 = O2 + 2 H2O. Functionally, occurs in almost all aerobically respiring organisms and serves to protect cells from the toxic effects of hydrogen peroxide. This is Catalase isozyme 2 (CAT2) from Ricinus communis (Castor bean).